A 536-amino-acid chain; its full sequence is L-aspartate oxidase 2 (536 aa).

FAD contacts are provided by residues 22–25 (EGLA) and 51–58 (SSYWAQGG). R284 acts as the Proton donor/acceptor in catalysis. Residues E369 and 385 to 386 (SL) each bind FAD.

This sequence belongs to the FAD-dependent oxidoreductase 2 family. NadB subfamily. It depends on FAD as a cofactor.

The protein resides in the cytoplasm. It carries out the reaction L-aspartate + O2 = iminosuccinate + H2O2. It functions in the pathway cofactor biosynthesis; NAD(+) biosynthesis; iminoaspartate from L-aspartate (oxidase route): step 1/1. Functionally, catalyzes the oxidation of L-aspartate to iminoaspartate, the first step in the de novo biosynthesis of NAD(+). This is L-aspartate oxidase 2 (nadB2) from Ralstonia nicotianae (strain ATCC BAA-1114 / GMI1000) (Ralstonia solanacearum).